The primary structure comprises 209 residues: uncharacterized protein (209 aa).

Residues 1-11 (MMRTNAGKETK) are compositionally biased toward basic and acidic residues. The disordered stretch occupies residues 1-20 (MMRTNAGKETKGYNPAPADS).

This is an uncharacterized protein from Caenorhabditis elegans.